We begin with the raw amino-acid sequence, 3907 residues long: MKTPIAVVGTACRFPGDISSPSQLWELLSNPKDVLRDLNPKRLNLTGFNHHNAEHHGATNVPNKSYILDDDVYRFDAAFFNISAAEAEAMDPQQRLLLETTYEALESAGYTLKQMRGSSTSVFIGAMTSDYHDIQARDLDTISRWHATGTSPSILSNRISYFFDLKGPSMTVNTACSSSLVALHQAVQSLRNGDCTAAIVGGVNLLLDPEVYISHSNLHMLSPTSRCRMWDRDADGYARGEGCTSIMIKTLDQALKDGDDVECIIRETAVNSDGRSAGITMPSPEAQATLIRETYERSGLDPVRDRCQYFECHGTGTQAGDPVEAQAIQQTFYPKNAVFSPDDKLYVGSIKTLIGHLEGCAGLAGVMKAIMCLKNRTITPNMFFDNLNPNISPFYDHLRIPTNTVPWPPVAHGCPLRASVNSFGFGGTNAHAIIESYVPSQPKRQASYCKESNRQKYTNSGPFVFSAHTQESLYSNIERTARYVRSNEALDLGHLAWTLAKRTVLPFKVAITALSREELLGNIDKAIVEYKASKASAQGPSPWKHPPEPHRIMGIFTGQGAQWAGMGRELLLASTVFRKSIERCEHALATLHDGPSWSLQEELLADKPSSRLSNPAISQPVTTAIEIAAYDLLCTSGVNVDVVVGHSSGEIVAAYALSIISAEDAMKIAYYRGLHTKPARSGRMLAVSLSFHDARELCSWPSFSGRVVVAASNGPASTTLSGDYDAILEVKALLDRKKTFARTLQVDVAYHSHHMVPCSAAYLESLRACNIQVKSPRSGCTWISSVTGRNAILDGDIQSFSATYWVDNMVKPVLFSQALDKSLCGTQDLGVCIEFGPHPALRGPVLDTLKSKGTSSVHYTSLLRRGQNDLNAASSAVGYLWERMADRVDLASFLQGFRSQALQLIKGLPGYSWDHGRRYWRESRISRRYRLEGTQLHPLLGRRSADEFPNEFCWKNMLHLKEMPWAQGYKEEGRVVLSAAFYLCSLLSAASSAAVCQRLVVLELNNFVVMEPITLEEYGNGVEYITTIRFDNEDFRTISSTILHAEASCHACKSDESVLTKVCTARLTLHLGDARGPDCDCLPPRGQRNDLLAPVDVADLYDSFEQAGMSYTGPFRSITSIQRSLGEATASVAWAVDTTMPESVLNPAMVEASFQAIMCAFASPLTEELRTPFHAKEIRRVLVTPRLALGGVSCDIDAFVTGVDCGGVEGDVSLYKPDGNAMIQIEGLVMKSVPQPDTSSDRNLFSHVVWESDPFGYSLISYPTPNEDMGWKRAADIVALYHLRRTVEEIDPLESAGFTPHHQLLYREISHIAAAGRGSEYYITHPDCAQTSEEIILAMIDKYAGIVDLQSLHSFGKALPAILRGELDLHNTPNEPDTLEGFTHDAAMFSQLSKDICSIVRRIVHKHPHMNVLGLDPGPSVITHQILEALDDKHTSYCLGSADPVILNKTLARLSAQHRNLYSKVIDLTTVNAGEHGSDKYDMVIAANPLHGTDTSANLFEVCRAMLKPGGYLVFVRVTGRVSMSLLCTCGWLPQWWQGYDQDARSWTDMSTVRYDSHLRSKGFSGIDHIFHDSMNSNGDGLSVMVTQAVNDTVMMLREPMNSTGLAPLTETVVFVGGKTLSVARLLQSIRRIVAASGTATTVVEDIDRLEMNGLTKQHSIISLVELDEPFFSRGAFHERLLAFKELVARSKHVLWLTTRNMTSISVAIGRAMRSERGADISLQFLGLSTVANISPSAVVEVFLRLTWSFVPVLTDGEVLWTNEPELQWDGSTLRIPRLVWDHKRNKRYNYRHRQGRPEAGLPQTAVPLSPRVSTNSVAVQIKYSCLVCTDVYLWVGARIDGQGNVVGISDHVSFVIHARLDHVHNLSDEHDLSPDALRATASFTLAYLLIKSLSGPILLYEPDELLAAAVEQDREPEQTVYFVTSKYNDCSRGWITVHPHASRRMVERMLPRKVSAFVDLSSSDDHVVTTLRDIYSHARIQAVELYRRAFAASPGQLIADSYTQACTSLSILSHTALEVTSSTEASTNIASVAYPKVVNWTSPAPIASPGDMISATTMFSSSGTYFMIDMATPLGLSILKWMATNGARKFVLAGRNPRMHEAWLEEMSRLGATVKPLKMDVSNKESILSAFTQIKEALPPIVGVCYAPLALSDQGFEYTVEDAGGLAATAMINAAKYLDELFPTPTLDFFVILTSLVSVIGTPKQVAYHAPSLFMTDLIQRRRLRGLVGSVMALGMVVDAGYFSRQGKEVIQRMMHHGYAPLSESDLHHAFGEVVAAGVPEAEGNAEIFFGLQLIDSQIDQSRESTSVSNHLLSHFITSRSGTKEGQYAEQEDSPSLLVPDEQLQESGPGRNKYDDLLARLSGKVRSILRLGDQALDVHTPLLDLGCDSLLAVDIQAWVAKEFDIDITPMDALLDTVAGLCEKAVPKPNAPGFVVEKEEQLVKELDFIDVATTASRSEHSSSVQDIPLDSTSSESSCVLCPSDSGFEQVRNDLEPRFTRIEKMSPHQSQIWFAGHWMRDPTQYNVVISYNVEGRFPVDRFKEALEHAVSMHESLRTAFFSDPNNGDLLQGVLKVPPPFLEHVRTPSAASVSQEFDKLASYQWRLEDGEVMRVTVVSIGKDQHTVIFGYHHIVMDGASWSTFLHDLKCIYEQRPRREVAQYVDYSLMLNRDIHNGTFAKELEFWKSELLPPPEMMPVLPLAKEKTRIPTDNFKVHTSTRHISIEATERIKQASRSLRGTPFHFYLATLQVFLAGLLKIESLCIGMSDANRKHQQFTGTVGYFLNMLPLRFEVQQTDSFANVFQKTSSKVLTALLNSSIPSNLVVDALNIPRVSNVTPLFQVAINYRVGEITRMSVDDFALNYDRSVMGNAPYDISFHVTPCANGTSIVEVNCRDYLYSPKATERIIDEYVRLLEIMSSNPLISVQSSVATSAPINEDGLSVQRGPRISHGWPATLPERFQDMVDQYGDRIAITDQGRDFSYLQLQAQSTRIGEALLQKGVRSGDTVAVLCPPSMNSVASMLAILRISAVYVPLDLSLPAARHKAMILASPVRALVCVSSTVEKVLELGVSTILNLSEIPDIRAPSTRFTNSAKGDSLAILLYTSGSTGQPKGVCLPQSGFINYLAAKRKELGLDSSTVVLQQSSLGFDMGLAQTLNAIMNGGKLVIVPQELRGDSIEIARIIRDQKVTFTLATPSEYLVMLQHGREYLHNYAGWRHACLGGEPFTDQLKREFVRLGKNCPVVQDSYGVTEISACTTFETMTASQLEEARSVGRTIPNTSLYIVDADCNLVATGEPGEICISGAGVALGYLNEEQTRLKFVQDPFALPDDIARGWTRVYRTGDKAKLLDDGSLILLGRMDGNTEVKVRGLRIDLEDVASTMVNCHPDLLSSAIVCVKGQGVSETLVAFVAMMPGQTASDVELQHLACNLPLPQYMRPSTVICLDELPRNANGKIDRKRIDAMPWTAPTTLSQSSKRLTLGEGELKLLWQVLLPGKHIQPESDFFLLGGNSTLLVRLQGAIRTSIGVSLTLREMYGASTLAQMALKVDARKAESPSMTINWLAETAIPQHILDRASSTSNLNLPKHCQGSGCQILLTGSTSFLGRVLVQLLLQVPEVERVHCIAVEKEQEHVPPTSDKVSLYYGSLLDPNLGLSTAEWASLQDRVDVVIHNGSNGHCLNTYNSLKGPNLGSTHRLAEFALQSQVPLHYISSGRVILQSGQTALGPTSVSFHPPPLDGSDGLTATKWAGEVFLERLAEHTDISISIHRPCTPIGDQAPAQDALNSLLRYSVNLGATPRLTRMEGYLDFQKVEIIAEEIATLVTSRFTKRSNTSSFTTRGVSFFHHSSNIKVPVKSFKEYMEKVHGRPFQELNLREWSSLALEQGIEPLIPSFLEAVDDNEETLRYPYLGN.

Residues 2 to 436 form the Ketosynthase family 3 (KS3) domain; sequence KTPIAVVGTA…GTNAHAIIES (435 aa). Residues Cys176, His313, and His356 each act as for beta-ketoacyl synthase activity in the active site. Residues 555 to 870 form a malonyl-CoA:ACP transacylase (MAT) domain region; it reads IFTGQGAQWA…SLLRRGQNDL (316 aa). Positions 937 to 1074 are N-terminal hotdog fold; that stretch reads HPLLGRRSAD…ARLTLHLGDA (138 aa). Residues 937–1236 form a dehydratase (DH) domain region; that stretch reads HPLLGRRSAD…GLVMKSVPQP (300 aa). In terms of domain architecture, PKS/mFAS DH spans 937 to 1239; the sequence is HPLLGRRSAD…MKSVPQPDTS (303 aa). The interval 1092 to 1239 is C-terminal hotdog fold; the sequence is LAPVDVADLY…MKSVPQPDTS (148 aa). A methyltransferase (MT) domain region spans residues 1386–1573; that stretch reads AAMFSQLSKD…FSGIDHIFHD (188 aa). Residues 2064–2238 are ketoreductase (KR)domain; that stretch reads GTYFMIDMAT…VGSVMALGMV (175 aa). The interval 2324-2352 is disordered; it reads TKEGQYAEQEDSPSLLVPDEQLQESGPGR. One can recognise a Carrier 1 domain in the interval 2356 to 2430; sequence DDLLARLSGK…LCEKAVPKPN (75 aa). Ser2390 bears the O-(pantetheine 4'-phosphoryl)serine mark. The condensation stretch occupies residues 2504 to 2926; sequence MSPHQSQIWF…SSNPLISVQS (423 aa). Residues 2959–3359 form an adenylation region; sequence FQDMVDQYGD…GSLILLGRMD (401 aa). Positions 3474 to 3549 constitute a Carrier 2 domain; sequence KRLTLGEGEL…QMALKVDARK (76 aa). Ser3509 bears the O-(pantetheine 4'-phosphoryl)serine mark. The reductase (RED) domain stretch occupies residues 3594-3813; the sequence is LTGSTSFLGR…DFQKVEIIAE (220 aa).

In the C-terminal section; belongs to the NRP synthetase family.

The catalysed reaction is L-tryptophan + malonyl-CoA + acetyl-CoA = cyclo-acetoacetyl-L-tryptophan + CO2 + 2 CoA + H2O. It participates in secondary metabolite biosynthesis. Hybrid PKS-NRPS synthetase; part of the gene cluster that mediates the biosynthesis of the fungal neurotoxin cyclopiazonic acid (CPA), a nanomolar inhibitor of Ca(2+)-ATPase with a unique pentacyclic indole tetramic acid scaffold. The hybrid two module polyketide synthase-nonribosomal peptide synthetase (PKS-NRPS) cpaS incorporates acetyl-CoA, malonyl-CoA, and tryptophan (Trp) and utilizes a C-terminal redox-incompetent reductase domain to make and release the tryptophan tetramic acid, cyclo-acetoacetyl-L-tryptophan (c-AATrp), as the first intermediate in the pathway. CpaS catalyzes a Dieckmann-type cyclization on the N-acetoacetyl-Trp intermediate bound in thioester linkage to the phosphopantetheinyl arm of the T domain to form and release c-AATrp. CpaD then regiospecifically dimethylallylates c-AATrp to form beta-cyclopiazonic acid. CpaD discriminates against free Trp but accepts tryptophan-containing thiohydantoins, diketopiperazines, and linear peptides as substrates for C4-prenylation and also acts as regiospecific O-dimethylallyltransferase (DMAT) on a tyrosine-derived tetramic acid. The beta-cyclopiazonate dehydrogenase cpaO then carries out the dehydrogenation of beta-CPA to yield an unstable enimine product, which is captured by intramolecular cyclization to create the pentacyclic fused scaffold of alpha-cyclopiazonate. Finally, the cytochrome P450 monooxygenase cpaH mediates the conversion of CPA into the less toxic 2-oxocyclopiazonic acid, the end product of the CPA pathway in A.oryza. In Aspergillus oryzae (Yellow koji mold), this protein is Cyclo-acetoacetyl-L-tryptophan synthase.